The sequence spans 236 residues: Cysteine-rich venom protein TRI1 (236 aa).

An N-terminal signal peptide occupies residues 1–18 (MIVFILLSLAAVLEQSFG). Positions 37–165 (VDRHNSFRRS…GYSYFYVCQY (129 aa)) constitute an SCP domain. Cystine bridges form between Cys74–Cys152, Cys91–Cys166, Cys147–Cys163, Cys185–Cys192, Cys188–Cys197, Cys201–Cys234, Cys210–Cys228, and Cys219–Cys232. The ShKT domain maps to 201–234 (CLREDKFTNCKSLVQQNSCQHDWTRKNCPATCFC).

Belongs to the CRISP family. In terms of tissue distribution, expressed by the venom gland.

It is found in the secreted. In terms of biological role, blocks contraction of smooth muscle elicited by high potassium-induced depolarization, but does not block caffeine-stimulated contraction. May target voltage-gated calcium channels on smooth muscle. The chain is Cysteine-rich venom protein TRI1 from Trimorphodon biscutatus (Western lyre snake).